The primary structure comprises 127 residues: Small ribosomal subunit protein uS11 (127 aa).

This sequence belongs to the universal ribosomal protein uS11 family. In terms of assembly, part of the 30S ribosomal subunit. Interacts with proteins S7 and S18. Binds to IF-3.

Functionally, located on the platform of the 30S subunit, it bridges several disparate RNA helices of the 16S rRNA. Forms part of the Shine-Dalgarno cleft in the 70S ribosome. The protein is Small ribosomal subunit protein uS11 of Ruthia magnifica subsp. Calyptogena magnifica.